The primary structure comprises 302 residues: Nucleotide-binding protein Bcep18194_A6125 (302 aa).

An ATP-binding site is contributed by Gly-8–Ser-15. Asp-57 to Ser-60 is a GTP binding site.

This sequence belongs to the RapZ-like family.

Its function is as follows. Displays ATPase and GTPase activities. The sequence is that of Nucleotide-binding protein Bcep18194_A6125 from Burkholderia lata (strain ATCC 17760 / DSM 23089 / LMG 22485 / NCIMB 9086 / R18194 / 383).